The primary structure comprises 138 residues: Acid shock protein (138 aa).

An N-terminal signal peptide occupies residues 1 to 21 (MKKVLALIVAATMGLSSVAFA). A propeptide spanning residues 22–85 (ADAVAPAAAA…TKKAPAQKAQ (64 aa)) is cleaved from the precursor. The segment covering 31-50 (APAATTTAAPAAAATKAPAK) has biased composition (low complexity). Residues 31–138 (APAATTTAAP…ATKKAAPAAK (108 aa)) form a disordered region. Composition is skewed to basic residues over residues 51–77 (ATHH…KATK) and 122–131 (AAKKHHKATK).

It belongs to the Asr family. Proteolytic processing gives rise to the active protein.

Its subcellular location is the periplasm. In terms of biological role, required for growth and/or survival at acidic conditions. The protein is Acid shock protein of Serratia proteamaculans (strain 568).